Here is a 153-residue protein sequence, read N- to C-terminus: Putative pre-16S rRNA nuclease (153 aa).

Belongs to the YqgF nuclease family.

It is found in the cytoplasm. In terms of biological role, could be a nuclease involved in processing of the 5'-end of pre-16S rRNA. The sequence is that of Putative pre-16S rRNA nuclease from Prochlorococcus marinus (strain MIT 9301).